The primary structure comprises 492 residues: Catalase isozyme 3 (492 aa).

Catalysis depends on residues His65 and Asn138. Tyr348 serves as a coordination point for heme.

Belongs to the catalase family. In terms of assembly, homotetramer. It depends on heme as a cofactor.

The protein localises to the peroxisome. It carries out the reaction 2 H2O2 = O2 + 2 H2O. Functionally, occurs in almost all aerobically respiring organisms and serves to protect cells from the toxic effects of hydrogen peroxide. This is Catalase isozyme 3 (CAT3) from Nicotiana plumbaginifolia (Leadwort-leaved tobacco).